Reading from the N-terminus, the 2539-residue chain is Zinc finger FYVE domain-containing protein 26 (2539 aa).

A phosphoserine mark is found at Ser-297, Ser-615, Ser-619, and Ser-703. Disordered stretches follow at residues 594–637, 699–724, and 738–806; these read HLPE…SLGV, ISSR…GLQS, and WRHK…SLSA. Residues 764–774 are compositionally biased toward basic residues; sequence PSLRRGRRTRR. Over residues 787–805 the composition is skewed to low complexity; that stretch reads SLESTSSELSTSTSEGSLS. Residue Ser-800 is modified to Phosphoserine. A coiled-coil region spans residues 868–895; that stretch reads MFMERYQEVIQELAQVEHKIENQNSDAG. The disordered stretch occupies residues 1267–1296; it reads DLPLSTPSSPRTTENPTLERKPYSSPRDSS. Residues 1271–1282 show a composition bias toward polar residues; sequence STPSSPRTTENP. Phosphoserine is present on residues Ser-1742, Ser-1764, Ser-1780, and Ser-1782. Residues 1754 to 1808 are disordered; it reads ADPETLPRSPSAEFSPAAPPGISSIHSPSLRERSFPPTQPSQEFVPPATPPARHQ. A compositionally biased stretch (low complexity) spans 1760–1769; the sequence is PRSPSAEFSP. The FYVE-type zinc-finger motif lies at 1812–1872; it reads DETESICMVC…VCDQCYSYCN (61 aa). Cys-1818, Cys-1821, Cys-1835, Cys-1838, Cys-1843, Cys-1846, Cys-1864, and Cys-1867 together coordinate Zn(2+).

Interacts with AP5Z1, AP5B1, AP5S1 and SPG11. Interacts with TTC19 and KIF13A. As to expression, strongest expression in the adrenal gland, bone marrow, adult brain, fetal brain, lung, placenta, prostate, skeletal muscle, testis, thymus, and retina. Intermediate levels are detected in other structures, including the spinal cord.

The protein localises to the cytoplasm. Its subcellular location is the cytoskeleton. It localises to the microtubule organizing center. The protein resides in the centrosome. It is found in the midbody. Functionally, phosphatidylinositol 3-phosphate-binding protein required for the abscission step in cytokinesis: recruited to the midbody during cytokinesis and acts as a regulator of abscission. May also be required for efficient homologous recombination DNA double-strand break repair. The chain is Zinc finger FYVE domain-containing protein 26 (ZFYVE26) from Homo sapiens (Human).